A 155-amino-acid chain; its full sequence is Small ribosomal subunit protein uS7 (155 aa).

This sequence belongs to the universal ribosomal protein uS7 family. Part of the 30S ribosomal subunit. Contacts proteins S9 and S11.

One of the primary rRNA binding proteins, it binds directly to 16S rRNA where it nucleates assembly of the head domain of the 30S subunit. Is located at the subunit interface close to the decoding center, probably blocks exit of the E-site tRNA. In Amoebophilus asiaticus (strain 5a2), this protein is Small ribosomal subunit protein uS7.